We begin with the raw amino-acid sequence, 258 residues long: Imidazole glycerol phosphate synthase subunit HisF (258 aa).

Active-site residues include aspartate 11 and aspartate 130.

Belongs to the HisA/HisF family. As to quaternary structure, heterodimer of HisH and HisF.

The protein localises to the cytoplasm. The catalysed reaction is 5-[(5-phospho-1-deoxy-D-ribulos-1-ylimino)methylamino]-1-(5-phospho-beta-D-ribosyl)imidazole-4-carboxamide + L-glutamine = D-erythro-1-(imidazol-4-yl)glycerol 3-phosphate + 5-amino-1-(5-phospho-beta-D-ribosyl)imidazole-4-carboxamide + L-glutamate + H(+). It participates in amino-acid biosynthesis; L-histidine biosynthesis; L-histidine from 5-phospho-alpha-D-ribose 1-diphosphate: step 5/9. In terms of biological role, IGPS catalyzes the conversion of PRFAR and glutamine to IGP, AICAR and glutamate. The HisF subunit catalyzes the cyclization activity that produces IGP and AICAR from PRFAR using the ammonia provided by the HisH subunit. The polypeptide is Imidazole glycerol phosphate synthase subunit HisF (Salmonella agona (strain SL483)).